The following is a 443-amino-acid chain: Serine/threonine-protein kinase ISR1 (443 aa).

The Protein kinase domain maps to 135–415 (LPSNKLVGQG…LRNDLFQDWK (281 aa)). ATP contacts are provided by residues 141–149 (VGQGSYSYV) and K169. D280 functions as the Proton acceptor in the catalytic mechanism.

This sequence belongs to the protein kinase superfamily. Ser/Thr protein kinase family.

It carries out the reaction L-seryl-[protein] + ATP = O-phospho-L-seryl-[protein] + ADP + H(+). It catalyses the reaction L-threonyl-[protein] + ATP = O-phospho-L-threonyl-[protein] + ADP + H(+). Functionally, probable serine/threonine protein kinase which may function redundantly with MPK1-independent branch of the PCK1 pathway that is presumed to be required for the tolerance to high temperatures and staurosporine. The polypeptide is Serine/threonine-protein kinase ISR1 (ISR1) (Saccharomyces cerevisiae (strain ATCC 204508 / S288c) (Baker's yeast)).